A 354-amino-acid polypeptide reads, in one-letter code: Short-chain dehydrogenase/reductase SAT2 (354 aa).

NADP(+) is bound by residues Ile-31, Asp-85, Arg-201, and Val-233.

The protein belongs to the short-chain dehydrogenases/reductases (SDR) family.

The protein operates within mycotoxin biosynthesis. Functionally, short-chain dehydrogenase/reductase; part of the satratoxin SC1 cluster involved in the biosynthesis of satratoxins, trichothecene mycotoxins that are associated with human food poisonings. Satratoxins are suggested to be made by products of multiple gene clusters (SC1, SC2 and SC3) that encode 21 proteins in all, including polyketide synthases, acetyltransferases, and other enzymes expected to modify the trichothecene skeleton. SC1 encodes 10 proteins, SAT1 to SAT10. The largest are SAT8, which encodes a putative polyketide synthase (PKS) with a conventional non-reducing architecture, and SAT10, a putative protein containing four ankyrin repeats and thus may be involved in protein scaffolding. The putative short-chain reductase SAT3 may assist the PKS in some capacity. SAT6 contains a secretory lipase domain and acts probably as a trichothecene esterase. SAT5 encodes a putative acetyltransferase, and so, with SAT6, may affect endogenous protection from toxicity. The probable transcription factor SAT9 may regulate the expression of the SC1 cluster. SC2 encodes proteins SAT11 to SAT16, the largest of which encodes the putative reducing PKS SAT13. SAT11 is a cytochrome P450 monooxygenase, while SAT14 and SAT16 are probable acetyltransferases. The SC2 cluster may be regulated by the transcription factor SAT15. SC3 is a small cluster that encodes 5 proteins, SAT17 to SAT21. SAT21 is a putative MFS-type transporter which may have a role in exporting secondary metabolites. The four other proteins putatively encoded in SC3 include the taurine hydroxylase-like protein SAT17, the O-methyltransferase SAT18, the acetyltransferase SAT19, and the Cys6-type zinc finger SAT20, the latter being probably involved in regulation of SC3 expression. This is Short-chain dehydrogenase/reductase SAT2 from Stachybotrys chartarum (strain CBS 109288 / IBT 7711) (Toxic black mold).